Consider the following 444-residue polypeptide: Phosphatidate cytidylyltransferase 2 (444 aa).

Basic and acidic residues predominate over residues 1–38 (MTELRQRVVREDAPPEDKESESEAKLDGETASDSESRA). The tract at residues 1-48 (MTELRQRVVREDAPPEDKESESEAKLDGETASDSESRAETAPLPTSVD) is disordered. A Phosphoserine modification is found at Ser20. Thr30 is modified (phosphothreonine). Ser32, Ser34, and Ser36 each carry phosphoserine. At Thr50 the chain carries Phosphothreonine. Transmembrane regions (helical) follow at residues 78–98 (MIAF…MIVM), 129–149 (WYFL…DYFF), 165–185 (HRFI…LSLV), 212–232 (LVIH…SCVI), 261–281 (GFIG…YVMS), and 339–359 (IALS…ASGF).

Belongs to the CDS family. In terms of assembly, homodimer. As to expression, ubiquitous. Expressed in the ganglion cell layer and inner nuclear layer of the retina.

It localises to the endoplasmic reticulum membrane. The enzyme catalyses a 1,2-diacyl-sn-glycero-3-phosphate + CTP + H(+) = a CDP-1,2-diacyl-sn-glycerol + diphosphate. The catalysed reaction is 1-octadecanoyl-2-(5Z,8Z,11Z,14Z-eicosatetraenoyl)-sn-glycero-3-phosphate + CTP + H(+) = 1-octadecanoyl-2-(5Z,8Z,11Z,14Z-eicosatetraenoyl)-sn-glycero-3-cytidine-5'-diphosphate + diphosphate. It catalyses the reaction 1-octadecanoyl-2-(9Z,12Z-octadecadienoyl)-sn-glycero-3-phosphate + CTP + H(+) = 1-octadecanoyl-2-(9Z,12Z-octadecadienoyl)-sn-glycero-3-cytidine-5'-diphosphate + diphosphate. It carries out the reaction 1-hexadecanoyl-2-(5Z,8Z,11Z,14Z-eicosatetraenoyl)-sn-glycero-3-phosphate + CTP + H(+) = 1-hexadecanoyl-2-(5Z,8Z,11Z,14Z-eicosatetraenoyl)-sn-glycero-3-cytidine-5'-diphosphate + diphosphate. The enzyme catalyses 1,2-di-(5Z,8Z,11Z,14Z)-eicosatetraenoyl-sn-glycero-3-phosphate + CTP + H(+) = 1,2-di-(5Z,8Z,11Z,14Z-eicosatetraenoyl)-sn-glycero-3-cytidine-5'-diphosphate + diphosphate. The catalysed reaction is 1-octadecanoyl-2-(9Z-octadecenoyl)-sn-glycero-3-phosphate + CTP + H(+) = 1-octadecanoyl-2-(9Z-octadecenoyl)-sn-glycero-3-cytidine-5'-diphosphate + diphosphate. It catalyses the reaction 1-octadecanoyl-2-(4Z,7Z,10Z,13Z,16Z,19Z-docosahexaenoyl)-sn-glycero-3-phosphate + CTP + H(+) = 1-octadecanoyl-2-(4Z,7Z,10Z,13Z,16Z,19Z-docosahexaenoyl)-sn-glycero-3-cytidine-5'-diphosphate + diphosphate. It carries out the reaction 1,2-di-(9Z,12Z-octadecadienoyl)-sn-glycero-3-phosphate + CTP + H(+) = 1,2-di-(9Z,12Z-octadecadienoyl)-sn-glycero-3-cytidine-5'-diphosphate + diphosphate. The enzyme catalyses 1,2-di-(9Z-octadecenoyl)-sn-glycero-3-phosphate + CTP + H(+) = 1,2-di-(9Z-octadecenoyl)-sn-glycero-3-cytidine-5'-diphosphate + diphosphate. It functions in the pathway phospholipid metabolism; CDP-diacylglycerol biosynthesis; CDP-diacylglycerol from sn-glycerol 3-phosphate: step 3/3. Functionally, catalyzes the conversion of phosphatidic acid (PA) to CDP-diacylglycerol (CDP-DAG), an essential intermediate in the synthesis of phosphatidylglycerol, cardiolipin and phosphatidylinositol. Exhibits specificity for the nature of the acyl chains at the sn-1 and sn-2 positions in the substrate, PA and the preferred acyl chain composition is 1-stearoyl-2-arachidonoyl-sn-phosphatidic acid. Plays an important role in regulating the growth and maturation of lipid droplets which are storage organelles at the center of lipid and energy homeostasis. This is Phosphatidate cytidylyltransferase 2 from Mus musculus (Mouse).